The chain runs to 197 residues: RNA pyrophosphohydrolase (197 aa).

The 144-residue stretch at 6-149 (GYRPNVGIVI…KRDVYRKAMK (144 aa)) folds into the Nudix hydrolase domain. The Nudix box signature appears at 38-59 (GGINDGETPEQAMYRELYEEVG). The segment at 165-197 (LSTNNNDEKKANYSAKKPYSPYRNQDKKRKTRV) is disordered.

Belongs to the Nudix hydrolase family. RppH subfamily. Requires a divalent metal cation as cofactor.

In terms of biological role, accelerates the degradation of transcripts by removing pyrophosphate from the 5'-end of triphosphorylated RNA, leading to a more labile monophosphorylated state that can stimulate subsequent ribonuclease cleavage. The polypeptide is RNA pyrophosphohydrolase (Mannheimia succiniciproducens (strain KCTC 0769BP / MBEL55E)).